Reading from the N-terminus, the 395-residue chain is Acetate kinase 2 (395 aa).

Residue Asn-8 participates in Mg(2+) binding. Residue Lys-15 coordinates ATP. Position 89 (Arg-89) interacts with substrate. Asp-146 functions as the Proton donor/acceptor in the catalytic mechanism. ATP-binding positions include 206–210 (HIGNG), 283–285 (DMR), and 331–335 (GVGEN). Glu-383 lines the Mg(2+) pocket.

Belongs to the acetokinase family. As to quaternary structure, homodimer. Requires Mg(2+) as cofactor. It depends on Mn(2+) as a cofactor.

It localises to the cytoplasm. It carries out the reaction acetate + ATP = acetyl phosphate + ADP. It participates in metabolic intermediate biosynthesis; acetyl-CoA biosynthesis; acetyl-CoA from acetate: step 1/2. Catalyzes the formation of acetyl phosphate from acetate and ATP. Can also catalyze the reverse reaction. In Lactococcus lactis subsp. lactis (strain IL1403) (Streptococcus lactis), this protein is Acetate kinase 2.